Consider the following 670-residue polypeptide: Penicillin-binding protein activator LpoA (670 aa).

The first 26 residues, 1–26, serve as a signal peptide directing secretion; the sequence is MLPSKVVHRKAVRTVPLLLAALIFAG. A lipid anchor (N-palmitoyl cysteine) is attached at cysteine 27. Cysteine 27 carries the S-diacylglycerol cysteine lipid modification.

It belongs to the LpoA family. As to quaternary structure, interacts with PBP1a.

The protein resides in the cell outer membrane. In terms of biological role, regulator of peptidoglycan synthesis that is essential for the function of penicillin-binding protein 1A (PBP1a). The sequence is that of Penicillin-binding protein activator LpoA from Erwinia tasmaniensis (strain DSM 17950 / CFBP 7177 / CIP 109463 / NCPPB 4357 / Et1/99).